The primary structure comprises 92 residues: N(2)-fixation sustaining protein CowN (92 aa).

This sequence belongs to the CowN family.

Its function is as follows. Is required to sustain N(2)-dependent growth in the presence of low levels of carbon monoxide (CO). Probably acts by protecting the N(2) fixation ability of the nitrogenase complex, which is inactivated in the presence of CO. The polypeptide is N(2)-fixation sustaining protein CowN (Rhodopseudomonas palustris (strain HaA2)).